Reading from the N-terminus, the 271-residue chain is Mannosyl-3-phosphoglycerate phosphatase (271 aa).

Residue Asp-13 is the Nucleophile of the active site. Positions 13, 15, and 214 each coordinate Mg(2+).

Belongs to the HAD-like hydrolase superfamily. MPGP family. Mg(2+) serves as cofactor.

Its subcellular location is the cytoplasm. The enzyme catalyses 2-O-(alpha-D-mannosyl)-3-phosphoglycerate + H2O = (2R)-2-O-(alpha-D-mannosyl)-glycerate + phosphate. In Shigella boydii serotype 4 (strain Sb227), this protein is Mannosyl-3-phosphoglycerate phosphatase (yedP).